The sequence spans 423 residues: Glucose-1-phosphate adenylyltransferase (423 aa).

Alpha-D-glucose 1-phosphate is bound by residues Y108, G173, 188 to 189 (EK), and S207.

It belongs to the bacterial/plant glucose-1-phosphate adenylyltransferase family. As to quaternary structure, homotetramer.

The enzyme catalyses alpha-D-glucose 1-phosphate + ATP + H(+) = ADP-alpha-D-glucose + diphosphate. Its pathway is glycan biosynthesis; glycogen biosynthesis. Involved in the biosynthesis of ADP-glucose, a building block required for the elongation reactions to produce glycogen. Catalyzes the reaction between ATP and alpha-D-glucose 1-phosphate (G1P) to produce pyrophosphate and ADP-Glc. In Francisella tularensis subsp. holarctica (strain FTNF002-00 / FTA), this protein is Glucose-1-phosphate adenylyltransferase.